Reading from the N-terminus, the 131-residue chain is Large ribosomal subunit protein bL19 (131 aa).

Positions 112 to 131 are disordered; it reads KSARIAERAGGPKASASTEA.

The protein belongs to the bacterial ribosomal protein bL19 family.

In terms of biological role, this protein is located at the 30S-50S ribosomal subunit interface and may play a role in the structure and function of the aminoacyl-tRNA binding site. In Caulobacter vibrioides (strain ATCC 19089 / CIP 103742 / CB 15) (Caulobacter crescentus), this protein is Large ribosomal subunit protein bL19.